A 248-amino-acid polypeptide reads, in one-letter code: 3-oxoacyl-[acyl-carrier-protein] reductase FabG (248 aa).

NADP(+) is bound by residues 14 to 17 (GSTR), T39, 65 to 66 (NL), and N92. Substrate is bound at residue S144. Y157 (proton acceptor) is an active-site residue. Residues 157-161 (YSTTK) and I190 contribute to the NADP(+) site.

Belongs to the short-chain dehydrogenases/reductases (SDR) family. Homotetramer.

It carries out the reaction a (3R)-hydroxyacyl-[ACP] + NADP(+) = a 3-oxoacyl-[ACP] + NADPH + H(+). Its pathway is lipid metabolism; fatty acid biosynthesis. Functionally, catalyzes the NADPH-dependent reduction of beta-ketoacyl-ACP substrates to beta-hydroxyacyl-ACP products, the first reductive step in the elongation cycle of fatty acid biosynthesis. The chain is 3-oxoacyl-[acyl-carrier-protein] reductase FabG (fabG) from Aquifex aeolicus (strain VF5).